Consider the following 292-residue polypeptide: MPWLQVRLAISPEQAETYEDALLEVGAVSVTFMDAEDQPIFEPDLNTTPLWSHTHLLALFEANADPEQVFAHLRLLTGAELPEHQAEVIEDQDWERSWMDNFQPMRFGRRLWIVPSWHDAPEKDAVNLLLDPGLAFGTGTHPTTALCLEWLDGQQLEGTQVLDFGCGSGILAIAALLLGAREAVGTDIDVQAIEASRDNAQRNGIADEKLALYLPEHMPAMQADVLVANILAGPLVSLAPQLSGLVRPGGLLALSGILAEQGEDVAAAYAADFELDPIVVRDGWVRISGRRR.

Residues T144, G165, D187, and N229 each coordinate S-adenosyl-L-methionine.

Belongs to the methyltransferase superfamily. PrmA family.

The protein resides in the cytoplasm. It catalyses the reaction L-lysyl-[protein] + 3 S-adenosyl-L-methionine = N(6),N(6),N(6)-trimethyl-L-lysyl-[protein] + 3 S-adenosyl-L-homocysteine + 3 H(+). Its function is as follows. Methylates ribosomal protein L11. The sequence is that of Ribosomal protein L11 methyltransferase from Pseudomonas putida (strain ATCC 47054 / DSM 6125 / CFBP 8728 / NCIMB 11950 / KT2440).